We begin with the raw amino-acid sequence, 347 residues long: Selenide, water dikinase (347 aa).

Residue C17 is part of the active site. ATP-binding positions include K20 and 48 to 50 (TRD). D51 serves as a coordination point for Mg(2+). ATP is bound by residues D68, D91, and 139-141 (GHS). D91 provides a ligand contact to Mg(2+). D227 is a Mg(2+) binding site.

This sequence belongs to the selenophosphate synthase 1 family. Class I subfamily. Homodimer. Mg(2+) serves as cofactor.

The enzyme catalyses hydrogenselenide + ATP + H2O = selenophosphate + AMP + phosphate + 2 H(+). Synthesizes selenophosphate from selenide and ATP. This chain is Selenide, water dikinase, found in Escherichia coli O139:H28 (strain E24377A / ETEC).